The chain runs to 214 residues: Rho-related GTP-binding protein RhoJ (214 aa).

S-palmitoyl cysteine attachment occurs at residues Cys-3 and Cys-11. GTP is bound by residues 31 to 36, 46 to 53, 75 to 79, 133 to 136, and 177 to 178; these read AVGKTC, FPEEYVPT, DTAGQ, TQID, and AL. Positions 50–58 match the Effector region motif; sequence YVPTVFDHY. The residue at position 211 (Cys-211) is a Cysteine methyl ester. The S-farnesyl cysteine moiety is linked to residue Cys-211. Residues 212–214 constitute a propeptide, removed in mature form; sequence AII.

The protein belongs to the small GTPase superfamily. Rho family. In terms of assembly, interacts with the CRIB domains of proteins such as Pak1 and Was/Wasp. Interacts with GLUL. Palmitoylated; regulates localization to the plasma membrane and may be mediated by GLUL. As to expression, highly expressed in heart with moderate levels in lung and liver. Very low levels detected in brain, spleen, skeletal muscle, kidney and testis.

It is found in the cell membrane. Its function is as follows. Plasma membrane-associated small GTPase specifically involved in angiogenesis. Required for endothelial cell migration during vascular development via its interaction with GLUL. Elicits the formation of F-actin-rich structures, thereby regulating endothelial cell migration. This Mus musculus (Mouse) protein is Rho-related GTP-binding protein RhoJ (Rhoj).